A 212-amino-acid polypeptide reads, in one-letter code: tRNA (guanine-N(7)-)-methyltransferase (212 aa).

The S-adenosyl-L-methionine site is built by Glu44, Glu69, Asp96, and Asp118. Asp118 is a catalytic residue. Lys122 serves as a coordination point for substrate. Residues 124–129 (RHEKRR) are interaction with RNA. Substrate is bound by residues Asp154 and 192-195 (TEYE).

Belongs to the class I-like SAM-binding methyltransferase superfamily. TrmB family.

The catalysed reaction is guanosine(46) in tRNA + S-adenosyl-L-methionine = N(7)-methylguanosine(46) in tRNA + S-adenosyl-L-homocysteine. Its pathway is tRNA modification; N(7)-methylguanine-tRNA biosynthesis. Its function is as follows. Catalyzes the formation of N(7)-methylguanine at position 46 (m7G46) in tRNA. The sequence is that of tRNA (guanine-N(7)-)-methyltransferase from Pediococcus pentosaceus (strain ATCC 25745 / CCUG 21536 / LMG 10740 / 183-1w).